We begin with the raw amino-acid sequence, 141 residues long: MSKNKTKLIITTPQGYFFNDDVEIVTLKTTEGYIGIQKDSQSLIASIKPSKLFINQINSKDLKICAISGGIAFIDKNEIKIITDAIEFKEDIDLERAKKGKEIIEQKLKKPNLSKSKIEEYNLKIEKANNRINVKNNSDTF.

The protein belongs to the ATPase epsilon chain family. F-type ATPases have 2 components, CF(1) - the catalytic core - and CF(0) - the membrane proton channel. CF(1) has five subunits: alpha(3), beta(3), gamma(1), delta(1), epsilon(1). CF(0) has three main subunits: a, b and c.

The protein localises to the cell membrane. Its function is as follows. Produces ATP from ADP in the presence of a proton gradient across the membrane. This chain is ATP synthase epsilon chain, found in Mycoplasma mobile (strain ATCC 43663 / 163K / NCTC 11711) (Mesomycoplasma mobile).